The chain runs to 335 residues: Galactosylgalactosylxylosylprotein 3-beta-glucuronosyltransferase 3 (335 aa).

The Cytoplasmic segment spans residues 1–7; the sequence is MKLKLKN. The helical; Signal-anchor for type II membrane protein transmembrane segment at 8-28 threads the bilayer; the sequence is VFLAYFLVSIAGLLYALVQLG. At 29–335 the chain is on the lumenal side; the sequence is QPCDCLPPLR…GRGSDPAIEV (307 aa). Residues 82 to 84, Asp-113, Arg-156, Arg-161, and 194 to 196 contribute to the UDP-alpha-D-glucuronate site; these read PTY and DDD. Residue Asp-196 coordinates Mn(2+). Residues 243 to 252 are interaction with galactose moiety of substrate glycoprotein; sequence WEPSRPFPVD. Glu-281 serves as the catalytic Proton donor/acceptor. Asn-300 carries N-linked (GlcNAc...) asparagine glycosylation. A UDP-alpha-D-glucuronate-binding site is contributed by 308 to 310; the sequence is HTR. Residues 312–322 are compositionally biased toward basic and acidic residues; that stretch reads EKPKMKQEEQL. Positions 312–335 are disordered; sequence EKPKMKQEEQLQRQGRGSDPAIEV.

It belongs to the glycosyltransferase 43 family. In terms of assembly, homodimer; disulfide-linked. Interacts with PXYLP1; the interaction increases the 2-phosphoxylose phosphatase activity of PXYLP1 during completion of linkage region formation in a B3GAT3-mediated manner. It depends on Mn(2+) as a cofactor. In terms of processing, N-glycosylated. As to expression, ubiquitous (but weakly expressed in all tissues examined).

It localises to the golgi apparatus membrane. Its subcellular location is the golgi apparatus. The protein localises to the cis-Golgi network. The enzyme catalyses 3-O-(beta-D-galactosyl-(1-&gt;3)-beta-D-galactosyl-(1-&gt;4)-beta-D-xylosyl)-L-seryl-[protein] + UDP-alpha-D-glucuronate = 3-O-(beta-D-GlcA-(1-&gt;3)-beta-D-Gal-(1-&gt;3)-beta-D-Gal-(1-&gt;4)-beta-D-Xyl)-L-seryl-[protein] + UDP + H(+). The protein operates within protein modification; protein glycosylation. Inhibited by EDTA. In terms of biological role, glycosaminoglycans biosynthesis. Involved in forming the linkage tetrasaccharide present in heparan sulfate and chondroitin sulfate. Transfers a glucuronic acid moiety from the uridine diphosphate-glucuronic acid (UDP-GlcUA) to the common linkage region trisaccharide Gal-beta-1,3-Gal-beta-1,4-Xyl covalently bound to a Ser residue at the glycosaminylglycan attachment site of proteoglycans. Can also play a role in the biosynthesis of l2/HNK-1 carbohydrate epitope on glycoproteins. Shows strict specificity for Gal-beta-1,3-Gal-beta-1,4-Xyl, exhibiting negligible incorporation into other galactoside substrates including Galbeta1-3Gal beta1-O-benzyl, Galbeta1-4GlcNAc and Galbeta1-4Glc. Stimulates 2-phosphoxylose phosphatase activity of PXYLP1 in presence of uridine diphosphate-glucuronic acid (UDP-GlcUA) during completion of linkage region formation. This Homo sapiens (Human) protein is Galactosylgalactosylxylosylprotein 3-beta-glucuronosyltransferase 3 (B3GAT3).